The sequence spans 139 residues: Large ribosomal subunit protein uL16 (139 aa).

The protein belongs to the universal ribosomal protein uL16 family. As to quaternary structure, part of the 50S ribosomal subunit.

Binds 23S rRNA and is also seen to make contacts with the A and possibly P site tRNAs. This chain is Large ribosomal subunit protein uL16, found in Picosynechococcus sp. (strain ATCC 27264 / PCC 7002 / PR-6) (Agmenellum quadruplicatum).